Consider the following 235-residue polypeptide: Sugar fermentation stimulation protein homolog (235 aa).

Belongs to the SfsA family.

This Allorhizobium ampelinum (strain ATCC BAA-846 / DSM 112012 / S4) (Agrobacterium vitis (strain S4)) protein is Sugar fermentation stimulation protein homolog.